A 176-amino-acid chain; its full sequence is Retinol-binding protein 4-A (176 aa).

At serine 1 the chain carries N-acetylserine. 3 disulfides stabilise this stretch: cysteine 3-cysteine 159, cysteine 69-cysteine 173, and cysteine 119-cysteine 128. Glutamine 97 contributes to the substrate binding site.

Belongs to the calycin superfamily. Lipocalin family.

Its subcellular location is the secreted. Its function is as follows. RBP delivers retinol from the liver stores to the peripheral tissues. In plasma, the RBP-retinol complex interacts with transthyretin, this prevents its loss by filtration through the kidney glomeruli. This is Retinol-binding protein 4-A (rbp4a) from Oncorhynchus mykiss (Rainbow trout).